Here is a 361-residue protein sequence, read N- to C-terminus: Peptide chain release factor 1 (361 aa).

Residue glutamine 236 is modified to N5-methylglutamine.

Belongs to the prokaryotic/mitochondrial release factor family. Methylated by PrmC. Methylation increases the termination efficiency of RF1.

It is found in the cytoplasm. Peptide chain release factor 1 directs the termination of translation in response to the peptide chain termination codons UAG and UAA. This is Peptide chain release factor 1 from Lactobacillus delbrueckii subsp. bulgaricus (strain ATCC BAA-365 / Lb-18).